The sequence spans 556 residues: Protein misato homolog 1 (556 aa).

Ser41 carries the post-translational modification Phosphoserine.

This sequence belongs to the misato family.

Its subcellular location is the mitochondrion outer membrane. It localises to the cytoplasm. Its function is as follows. Involved in the regulation of mitochondrial distribution and morphology. Required for mitochondrial fusion and mitochondrial network formation. This Mus musculus (Mouse) protein is Protein misato homolog 1 (Msto1).